A 229-amino-acid polypeptide reads, in one-letter code: Acetylcholine-binding protein (229 aa).

The N-terminal stretch at 1-19 (MRRNIFCLACLWIVQACLS) is a signal peptide. Asn85 carries N-linked (GlcNAc...) asparagine glycosylation. In terms of domain architecture, Ig-like spans 114–217 (PEVLTPQLAR…PEAYEDVEVS (104 aa)). Cys142 and Cys155 are disulfide-bonded.

Homopentamer. N-glycosylated. In terms of tissue distribution, expressed by glial cells.

Its subcellular location is the synaptic cleft. Functionally, binds to acetylcholine. Modulates neuronal synaptic transmission. This Lymnaea stagnalis (Great pond snail) protein is Acetylcholine-binding protein.